A 155-amino-acid chain; its full sequence is MADLSSLKDLGTATEAAAPAHVRKVDSLGRSYATGKRKNAVARVWVKPGSGKIIVNGKEFAEYFARPVLQMILRQPIVAAARDGQFDIVATVAGGGLSGQAGAVRHGLSKALTYFEPGLRSVLKKGGFLTRDSRVVERKKYGKAKARRSFQFSKR.

It belongs to the universal ribosomal protein uS9 family.

This chain is Small ribosomal subunit protein uS9, found in Rhizobium leguminosarum bv. trifolii (strain WSM2304).